We begin with the raw amino-acid sequence, 142 residues long: Gene 46 protein (142 aa).

The interval 82–101 is disordered; that stretch reads KALAQVKPETGPSRPNRKKL.

This is Gene 46 protein (46) from Mycobacterium (Mycobacteriophage L5).